The primary structure comprises 81 residues: Short neurotoxin 1 (81 aa).

The first 21 residues, 1–21, serve as a signal peptide directing secretion; the sequence is MKTLLLTLVVVTIVFLDLGYT. 4 disulfides stabilise this stretch: cysteine 24-cysteine 43, cysteine 38-cysteine 60, cysteine 62-cysteine 73, and cysteine 74-cysteine 79.

It belongs to the three-finger toxin family. Short-chain subfamily. Type I alpha-neurotoxin sub-subfamily. Expressed by the venom gland.

The protein localises to the secreted. Its function is as follows. Binds to muscle nicotinic acetylcholine receptor (nAChR) and inhibit acetylcholine from binding to the receptor, thereby impairing neuromuscular transmission. The polypeptide is Short neurotoxin 1 (Notechis scutatus scutatus (Mainland tiger snake)).